The sequence spans 136 residues: Galectin-7 (136 aa).

One can recognise a Galectin domain in the interval 6 to 136; it reads HKTSLPQGVR…DVQLHSLNIF (131 aa). 70–76 lines the a beta-D-galactoside pocket; it reads WGREERG.

As to quaternary structure, monomer.

It localises to the cytoplasm. Its subcellular location is the nucleus. The protein localises to the secreted. Its function is as follows. Could be involved in cell-cell and/or cell-matrix interactions necessary for normal growth control. Pro-apoptotic protein that functions intracellularly upstream of JNK activation and cytochrome c release. This Mus musculus (Mouse) protein is Galectin-7 (Lgals7).